We begin with the raw amino-acid sequence, 259 residues long: MADGKVIDIEQKVPDFREQRRRKSRRRLVLYISILAFFLLFVYYFQSDYSTVGHVDVYGTDMVDEKWVVESSGLTDGVSMWSYPFHEAVEELMEHPVIVSVEAERNWPRSITLYVDEYRTVGYLRSAENGAFYPLLNDGSILNQEEFQGSHVDEPLISGMDAHSELGRLAHELDELDEMVTRRISEVVHEPDQGEHHLTLYTTDGFTVYTEINDFASNMTAYPAVAIQLNPEEEGILHMRMTPYFEREGQEEEEIEIEE.

The Cytoplasmic segment spans residues Met-1 to Arg-27. The helical transmembrane segment at Leu-28–Phe-45 threads the bilayer. Residues Gln-46–Glu-259 lie on the Extracellular side of the membrane. Residues Ser-50–Tyr-118 enclose the POTRA domain.

This sequence belongs to the FtsQ/DivIB family. DivIB subfamily.

It localises to the cell membrane. Functionally, cell division protein that may be involved in stabilizing or promoting the assembly of the division complex. This is Cell division protein DivIB from Bacillus selenitireducens (strain ATCC 700615 / DSM 15326 / MLS10).